The following is a 135-amino-acid chain: uncharacterized protein (135 aa).

A coiled-coil region spans residues 68 to 135 (DEVDNYIRVF…KKESEDEDEL (68 aa)). Residues 88-135 (EKIVGKPPKSTSAPDIDELEEEPDEETEEKSEEKTEKKKKESEDEDEL) form a disordered region. The segment covering 102 to 117 (DIDELEEEPDEETEEK) has biased composition (acidic residues). Basic and acidic residues predominate over residues 118–129 (SEEKTEKKKKES).

This is an uncharacterized protein from Acidianus hospitalis (AFV-1).